Here is a 141-residue protein sequence, read N- to C-terminus: Nucleoside diphosphate kinase (141 aa).

Residues Lys11, Phe59, Arg87, Thr93, Arg104, and Asn114 each coordinate ATP. The Pros-phosphohistidine intermediate role is filled by His117.

Belongs to the NDK family. Homotetramer. It depends on Mg(2+) as a cofactor.

It is found in the cytoplasm. It carries out the reaction a 2'-deoxyribonucleoside 5'-diphosphate + ATP = a 2'-deoxyribonucleoside 5'-triphosphate + ADP. It catalyses the reaction a ribonucleoside 5'-diphosphate + ATP = a ribonucleoside 5'-triphosphate + ADP. In terms of biological role, major role in the synthesis of nucleoside triphosphates other than ATP. The ATP gamma phosphate is transferred to the NDP beta phosphate via a ping-pong mechanism, using a phosphorylated active-site intermediate. This is Nucleoside diphosphate kinase from Ralstonia nicotianae (strain ATCC BAA-1114 / GMI1000) (Ralstonia solanacearum).